Reading from the N-terminus, the 396-residue chain is S-adenosylmethionine synthase (396 aa).

His-16 is an ATP binding site. Asp-18 provides a ligand contact to Mg(2+). Glu-44 lines the K(+) pocket. Residues Glu-57 and Gln-100 each coordinate L-methionine. The segment at 100–110 (QSQDIARGVDN) is flexible loop. ATP-binding positions include 162–164 (DGK), 228–229 (RF), Asp-237, 243–244 (RK), Ala-260, and Lys-264. Asp-237 lines the L-methionine pocket. Lys-268 is an L-methionine binding site.

It belongs to the AdoMet synthase family. Homotetramer; dimer of dimers. It depends on Mg(2+) as a cofactor. K(+) is required as a cofactor.

The protein resides in the cytoplasm. It catalyses the reaction L-methionine + ATP + H2O = S-adenosyl-L-methionine + phosphate + diphosphate. It functions in the pathway amino-acid biosynthesis; S-adenosyl-L-methionine biosynthesis; S-adenosyl-L-methionine from L-methionine: step 1/1. Catalyzes the formation of S-adenosylmethionine (AdoMet) from methionine and ATP. The overall synthetic reaction is composed of two sequential steps, AdoMet formation and the subsequent tripolyphosphate hydrolysis which occurs prior to release of AdoMet from the enzyme. The polypeptide is S-adenosylmethionine synthase (Myxococcus xanthus (strain DK1622)).